The sequence spans 549 residues: DDB1- and CUL4-associated factor 11 (549 aa).

A compositionally biased stretch (low complexity) spans 1–24; sequence MGSRNSSSAGSGSLEPSEGLSRRG. Residues 1-40 form a disordered region; that stretch reads MGSRNSSSAGSGSLEPSEGLSRRGTGLRRSEEEEEEDEDV. Phosphoserine is present on residues S73 and S75. WD repeat units lie at residues 170–210, 216–258, 263–302, 305–345, 353–392, 435–480, and 481–520; these read TYSQ…HKFK, DVGW…TALD, ERRF…RTLQ, SHED…EDDP, GHQD…SREG, GVLH…KKLT, and NHKA…YFQD.

In terms of assembly, interacts with DDB1 and CUL4A.

Its pathway is protein modification; protein ubiquitination. In terms of biological role, may function as a substrate receptor for CUL4-DDB1 E3 ubiquitin-protein ligase complex. This chain is DDB1- and CUL4-associated factor 11 (Dcaf11), found in Mus musculus (Mouse).